A 363-amino-acid chain; its full sequence is Biotin synthase (363 aa).

One can recognise a Radical SAM core domain in the interval Asn38–Arg266. [4Fe-4S] cluster is bound by residues Cys53, Cys57, and Cys60. Residues Cys97, Cys129, Cys189, and Arg261 each coordinate [2Fe-2S] cluster. The segment at Lys315–Ala363 is disordered. Over residues Ala316 to Leu353 the composition is skewed to basic and acidic residues. Over residues Glu354–Ala363 the composition is skewed to polar residues.

The protein belongs to the radical SAM superfamily. Biotin synthase family. As to quaternary structure, homodimer. [4Fe-4S] cluster serves as cofactor. The cofactor is [2Fe-2S] cluster.

The catalysed reaction is (4R,5S)-dethiobiotin + (sulfur carrier)-SH + 2 reduced [2Fe-2S]-[ferredoxin] + 2 S-adenosyl-L-methionine = (sulfur carrier)-H + biotin + 2 5'-deoxyadenosine + 2 L-methionine + 2 oxidized [2Fe-2S]-[ferredoxin]. Its pathway is cofactor biosynthesis; biotin biosynthesis; biotin from 7,8-diaminononanoate: step 2/2. In terms of biological role, catalyzes the conversion of dethiobiotin (DTB) to biotin by the insertion of a sulfur atom into dethiobiotin via a radical-based mechanism. The sequence is that of Biotin synthase from Christiangramia forsetii (strain DSM 17595 / CGMCC 1.15422 / KT0803) (Gramella forsetii).